A 325-amino-acid chain; its full sequence is Phosphate acyltransferase (325 aa).

The protein belongs to the PlsX family. In terms of assembly, homodimer. Probably interacts with PlsY.

The protein resides in the cytoplasm. It catalyses the reaction a fatty acyl-[ACP] + phosphate = an acyl phosphate + holo-[ACP]. Its pathway is lipid metabolism; phospholipid metabolism. Catalyzes the reversible formation of acyl-phosphate (acyl-PO(4)) from acyl-[acyl-carrier-protein] (acyl-ACP). This enzyme utilizes acyl-ACP as fatty acyl donor, but not acyl-CoA. The sequence is that of Phosphate acyltransferase from Staphylococcus epidermidis (strain ATCC 12228 / FDA PCI 1200).